The primary structure comprises 165 residues: Nucleotide-binding protein SYNW1816 (165 aa).

It belongs to the YajQ family.

Nucleotide-binding protein. This chain is Nucleotide-binding protein SYNW1816, found in Parasynechococcus marenigrum (strain WH8102).